Here is a 658-residue protein sequence, read N- to C-terminus: Probable rhamnogalacturonate lyase B (658 aa).

The first 19 residues, 1–19, serve as a signal peptide directing secretion; that stretch reads MRFAIPLGAACAWAGVALA. Asparagine 110, asparagine 143, asparagine 239, asparagine 280, asparagine 522, asparagine 530, asparagine 592, and asparagine 633 each carry an N-linked (GlcNAc...) asparagine glycan.

This sequence belongs to the polysaccharide lyase 4 family.

It localises to the secreted. It carries out the reaction Endotype eliminative cleavage of L-alpha-rhamnopyranosyl-(1-&gt;4)-alpha-D-galactopyranosyluronic acid bonds of rhamnogalacturonan I domains in ramified hairy regions of pectin leaving L-rhamnopyranose at the reducing end and 4-deoxy-4,5-unsaturated D-galactopyranosyluronic acid at the non-reducing end.. In terms of biological role, pectinolytic enzymes consist of four classes of enzymes: pectin lyase, polygalacturonase, pectin methylesterase and rhamnogalacturonase. Degrades the rhamnogalacturonan I (RG-I) backbone of pectin. The protein is Probable rhamnogalacturonate lyase B (rglB) of Aspergillus fumigatus (strain CBS 144.89 / FGSC A1163 / CEA10) (Neosartorya fumigata).